A 118-amino-acid polypeptide reads, in one-letter code: Large ribosomal subunit protein bL20 (118 aa).

This sequence belongs to the bacterial ribosomal protein bL20 family.

Functionally, binds directly to 23S ribosomal RNA and is necessary for the in vitro assembly process of the 50S ribosomal subunit. It is not involved in the protein synthesizing functions of that subunit. In Methylibium petroleiphilum (strain ATCC BAA-1232 / LMG 22953 / PM1), this protein is Large ribosomal subunit protein bL20.